The primary structure comprises 46 residues: Diuretic hormone (46 aa).

Ile46 is modified (isoleucine amide).

The protein belongs to the sauvagine/corticotropin-releasing factor/urotensin I family.

It is found in the secreted. In terms of biological role, regulation of fluid secretion. Stimulates primary urine secretion by Malpighian tubules and causes a dose-dependent stimulation of cAMP levels in the tubules. The polypeptide is Diuretic hormone (Acheta domesticus (House cricket)).